The following is a 251-amino-acid chain: Methionine aminopeptidase (251 aa).

Histidine 79 contacts substrate. Residues aspartate 96, aspartate 107, and histidine 170 each contribute to the a divalent metal cation site. Histidine 177 contributes to the substrate binding site. Residues glutamate 204 and glutamate 235 each coordinate a divalent metal cation.

This sequence belongs to the peptidase M24A family. Methionine aminopeptidase type 1 subfamily. Monomer. Requires Co(2+) as cofactor. Zn(2+) is required as a cofactor. The cofactor is Mn(2+). It depends on Fe(2+) as a cofactor.

The catalysed reaction is Release of N-terminal amino acids, preferentially methionine, from peptides and arylamides.. Functionally, removes the N-terminal methionine from nascent proteins. The N-terminal methionine is often cleaved when the second residue in the primary sequence is small and uncharged (Met-Ala-, Cys, Gly, Pro, Ser, Thr, or Val). Requires deformylation of the N(alpha)-formylated initiator methionine before it can be hydrolyzed. This chain is Methionine aminopeptidase, found in Borreliella burgdorferi (strain ATCC 35210 / DSM 4680 / CIP 102532 / B31) (Borrelia burgdorferi).